A 488-amino-acid chain; its full sequence is Proline--tRNA ligase (488 aa).

This sequence belongs to the class-II aminoacyl-tRNA synthetase family. ProS type 3 subfamily. In terms of assembly, homodimer.

Its subcellular location is the cytoplasm. The enzyme catalyses tRNA(Pro) + L-proline + ATP = L-prolyl-tRNA(Pro) + AMP + diphosphate. Catalyzes the attachment of proline to tRNA(Pro) in a two-step reaction: proline is first activated by ATP to form Pro-AMP and then transferred to the acceptor end of tRNA(Pro). This is Proline--tRNA ligase from Symbiobacterium thermophilum (strain DSM 24528 / JCM 14929 / IAM 14863 / T).